The primary structure comprises 199 residues: MRILLIFFVPSGILDQLFPRISILSTLRVNLTNSPLLTPNLTLYSMVNGFDFSKMFGRKDPELVSKEVKQYNERRFKQMALFYGFTVATFICSKIAYRGVIKRRYVPNYYQHNHVAPPFSFYRDALSAVFHSTSLAITSLGMASTGVLWYYDISSVAEFSFKLKQALGGHDKEQELKKLPEDETVQEIQNSINSYLGDR.

2 helical membrane-spanning segments follow: residues 79–101 and 129–151; these read MALFYGFTVATFICSKIAYRGVI and VFHSTSLAITSLGMASTGVLWYY.

This sequence belongs to the AIM11 family.

The protein resides in the membrane. This Komagataella phaffii (strain GS115 / ATCC 20864) (Yeast) protein is Altered inheritance of mitochondria protein 11 (AIM11).